The primary structure comprises 629 residues: tRNA uridine 5-carboxymethylaminomethyl modification enzyme MnmG (629 aa).

FAD-binding positions include 13-18 (GGGHAG), Val-125, and Ser-180. Position 273–287 (273–287 (GPRYCPSIEDKVMRF)) interacts with NAD(+). Gln-370 provides a ligand contact to FAD.

The protein belongs to the MnmG family. Homodimer. Heterotetramer of two MnmE and two MnmG subunits. FAD serves as cofactor.

It is found in the cytoplasm. In terms of biological role, NAD-binding protein involved in the addition of a carboxymethylaminomethyl (cmnm) group at the wobble position (U34) of certain tRNAs, forming tRNA-cmnm(5)s(2)U34. The protein is tRNA uridine 5-carboxymethylaminomethyl modification enzyme MnmG of Salmonella agona (strain SL483).